The primary structure comprises 253 residues: Testis-expressed protein 101 (253 aa).

Positions 1-24 (MAACWVHYLLLLLLGVSHQTLAQS) are cleaved as a signal peptide. 5 N-linked (GlcNAc...) asparagine glycosylation sites follow: N44, N112, N117, N121, and N162. The region spanning 53 to 117 (ETCNPGELCQ…SNYCNSSLCN (65 aa)) is the UPAR/Ly6 1 domain. A UPAR/Ly6 2 domain is found at 143–218 (CPTCVALGSC…KETCSYHSLL (76 aa)). S226 is lipidated: GPI-anchor amidated serine. The propeptide at 227 to 253 (RASGRSTSLWVLELLLPAVLVALTHFP) is removed in mature form.

As to quaternary structure, interacts with VAMP3. Interacts with LY6K. Interacts with DPEP3; co-localized on the cell surface of spermatocytes, spermatids, and testicular spermatozoa, co-localized only in cytoplasmic droplets of caput and corpus epididymal sperm. Interacts with ADAM5. Post-translationally, N-glycosylated; by high mannose and/or biantennary complex and/or certain types of hybrid oligosaccharides; possesses different oligosaccharides chains according to its subcellular localization in the testis. Sheds from membrane raft by ACE and released from the cell surface of epididymal sperm while it passes through the caput epididymis leading to disappearance of TEX101 on spermatozoa; is essential to produce fertile spermatozoa.

The protein resides in the cell membrane. Its subcellular location is the membrane raft. It localises to the cytoplasmic vesicle. It is found in the secretory vesicle. The protein localises to the acrosome. The protein resides in the secreted. Functionally, plays a role in fertilization by controlling binding of sperm to zona pellucida and migration of spermatozoa into the oviduct. May play a role in signal transduction and promote protein tyrosine phosphorylation. The chain is Testis-expressed protein 101 from Cricetulus griseus (Chinese hamster).